The sequence spans 198 residues: Cytochrome c oxidase subunit 2 (198 aa).

The chain crosses the membrane as a helical span at residues Ala-1–Met-13. At Leu-14 to Gln-26 the chain is on the mitochondrial matrix side. Residues Glu-27–Met-54 form a helical membrane-spanning segment. At Asp-55–Leu-198 the chain is on the mitochondrial intermembrane side. Cu cation-binding residues include His-128, Cys-163, Glu-165, Cys-167, His-171, and Met-174. Glu-165 contributes to the Mg(2+) binding site.

It belongs to the cytochrome c oxidase subunit 2 family. In terms of assembly, component of the cytochrome c oxidase (complex IV, CIV), a multisubunit enzyme composed of 14 subunits. The complex is composed of a catalytic core of 3 subunits MT-CO1, MT-CO2 and MT-CO3, encoded in the mitochondrial DNA, and 11 supernumerary subunits COX4I, COX5A, COX5B, COX6A, COX6B, COX6C, COX7A, COX7B, COX7C, COX8 and NDUFA4, which are encoded in the nuclear genome. The complex exists as a monomer or a dimer and forms supercomplexes (SCs) in the inner mitochondrial membrane with NADH-ubiquinone oxidoreductase (complex I, CI) and ubiquinol-cytochrome c oxidoreductase (cytochrome b-c1 complex, complex III, CIII), resulting in different assemblies (supercomplex SCI(1)III(2)IV(1) and megacomplex MCI(2)III(2)IV(2)). Found in a complex with TMEM177, COA6, COX18, COX20, SCO1 and SCO2. Interacts with TMEM177 in a COX20-dependent manner. Interacts with COX20. Interacts with COX16. Requires Cu cation as cofactor.

Its subcellular location is the mitochondrion inner membrane. The enzyme catalyses 4 Fe(II)-[cytochrome c] + O2 + 8 H(+)(in) = 4 Fe(III)-[cytochrome c] + 2 H2O + 4 H(+)(out). Its function is as follows. Component of the cytochrome c oxidase, the last enzyme in the mitochondrial electron transport chain which drives oxidative phosphorylation. The respiratory chain contains 3 multisubunit complexes succinate dehydrogenase (complex II, CII), ubiquinol-cytochrome c oxidoreductase (cytochrome b-c1 complex, complex III, CIII) and cytochrome c oxidase (complex IV, CIV), that cooperate to transfer electrons derived from NADH and succinate to molecular oxygen, creating an electrochemical gradient over the inner membrane that drives transmembrane transport and the ATP synthase. Cytochrome c oxidase is the component of the respiratory chain that catalyzes the reduction of oxygen to water. Electrons originating from reduced cytochrome c in the intermembrane space (IMS) are transferred via the dinuclear copper A center (CU(A)) of subunit 2 and heme A of subunit 1 to the active site in subunit 1, a binuclear center (BNC) formed by heme A3 and copper B (CU(B)). The BNC reduces molecular oxygen to 2 water molecules using 4 electrons from cytochrome c in the IMS and 4 protons from the mitochondrial matrix. The sequence is that of Cytochrome c oxidase subunit 2 (MT-CO2) from Tinamus major (Great tinamou).